Consider the following 155-residue polypeptide: MSRRGTAEKKTAKSDPIYRNRLVNMLVNRILKHGKKSLAYQIIYRAVKKIQQKTETNPLSVLRQAIRGVTPDIAVKSRRVGGSTHQVPIEIGSTQGKALAIRWLLAASRKRPGRNMAFKLSSELVDAAKGSGDAIRKKEETHKMAEANRAFAHFR.

This sequence belongs to the universal ribosomal protein uS7 family. Part of the 30S ribosomal subunit.

Its subcellular location is the plastid. The protein resides in the chloroplast. Its function is as follows. One of the primary rRNA binding proteins, it binds directly to 16S rRNA where it nucleates assembly of the head domain of the 30S subunit. This Lemna minor (Common duckweed) protein is Small ribosomal subunit protein uS7cz/uS7cy (rps7-A).